A 227-amino-acid polypeptide reads, in one-letter code: Enolase-phosphatase E1 (227 aa).

This sequence belongs to the HAD-like hydrolase superfamily. MasA/MtnC family. In terms of assembly, monomer. Mg(2+) is required as a cofactor.

It carries out the reaction 5-methylsulfanyl-2,3-dioxopentyl phosphate + H2O = 1,2-dihydroxy-5-(methylsulfanyl)pent-1-en-3-one + phosphate. It participates in amino-acid biosynthesis; L-methionine biosynthesis via salvage pathway; L-methionine from S-methyl-5-thio-alpha-D-ribose 1-phosphate: step 3/6. Its pathway is amino-acid biosynthesis; L-methionine biosynthesis via salvage pathway; L-methionine from S-methyl-5-thio-alpha-D-ribose 1-phosphate: step 4/6. Its function is as follows. Bifunctional enzyme that catalyzes the enolization of 2,3-diketo-5-methylthiopentyl-1-phosphate (DK-MTP-1-P) into the intermediate 2-hydroxy-3-keto-5-methylthiopentenyl-1-phosphate (HK-MTPenyl-1-P), which is then dephosphorylated to form the acireductone 1,2-dihydroxy-3-keto-5-methylthiopentene (DHK-MTPene). The protein is Enolase-phosphatase E1 of Azotobacter vinelandii (strain DJ / ATCC BAA-1303).